We begin with the raw amino-acid sequence, 330 residues long: Beta-hexosaminidase (330 aa).

Residues D62, R70, R133, and 163–164 contribute to the substrate site; that span reads KH. H176 acts as the Proton donor/acceptor in catalysis. D246 acts as the Nucleophile in catalysis.

Belongs to the glycosyl hydrolase 3 family. NagZ subfamily.

It is found in the cytoplasm. It catalyses the reaction Hydrolysis of terminal non-reducing N-acetyl-D-hexosamine residues in N-acetyl-beta-D-hexosaminides.. The protein operates within cell wall biogenesis; peptidoglycan recycling. Its function is as follows. Plays a role in peptidoglycan recycling by cleaving the terminal beta-1,4-linked N-acetylglucosamine (GlcNAc) from peptide-linked peptidoglycan fragments, giving rise to free GlcNAc, anhydro-N-acetylmuramic acid and anhydro-N-acetylmuramic acid-linked peptides. In Idiomarina loihiensis (strain ATCC BAA-735 / DSM 15497 / L2-TR), this protein is Beta-hexosaminidase.